Consider the following 289-residue polypeptide: Ribonuclease Z (289 aa).

Zn(2+) contacts are provided by His63, His65, Asp67, His68, His143, Asp197, and His255. Asp67 acts as the Proton acceptor in catalysis.

Belongs to the RNase Z family. As to quaternary structure, homodimer. The cofactor is Zn(2+).

The catalysed reaction is Endonucleolytic cleavage of RNA, removing extra 3' nucleotides from tRNA precursor, generating 3' termini of tRNAs. A 3'-hydroxy group is left at the tRNA terminus and a 5'-phosphoryl group is left at the trailer molecule.. Its function is as follows. Zinc phosphodiesterase, which displays some tRNA 3'-processing endonuclease activity. Probably involved in tRNA maturation, by removing a 3'-trailer from precursor tRNA. The protein is Ribonuclease Z of Azobacteroides pseudotrichonymphae genomovar. CFP2.